Reading from the N-terminus, the 200-residue chain is Protein GrpE (200 aa).

The segment covering 1-11 (MSNQTNKAQDN) has biased composition (polar residues). A disordered region spans residues 1–25 (MSNQTNKAQDNQVEEIVEGELLNEN).

The protein belongs to the GrpE family. As to quaternary structure, homodimer.

It localises to the cytoplasm. Its function is as follows. Participates actively in the response to hyperosmotic and heat shock by preventing the aggregation of stress-denatured proteins, in association with DnaK and GrpE. It is the nucleotide exchange factor for DnaK and may function as a thermosensor. Unfolded proteins bind initially to DnaJ; upon interaction with the DnaJ-bound protein, DnaK hydrolyzes its bound ATP, resulting in the formation of a stable complex. GrpE releases ADP from DnaK; ATP binding to DnaK triggers the release of the substrate protein, thus completing the reaction cycle. Several rounds of ATP-dependent interactions between DnaJ, DnaK and GrpE are required for fully efficient folding. In Shewanella pealeana (strain ATCC 700345 / ANG-SQ1), this protein is Protein GrpE.